Reading from the N-terminus, the 189-residue chain is Glycerol-3-phosphate acyltransferase (189 aa).

The next 5 helical transmembrane spans lie at 1–21, 51–71, 77–97, 111–131, and 151–171; these read MFWL…AILL, LAVL…LIAH, LQQQ…PLYF, MLLG…ALTF, and LLAW…LLIV.

It belongs to the PlsY family. In terms of assembly, probably interacts with PlsX.

Its subcellular location is the cell inner membrane. The catalysed reaction is an acyl phosphate + sn-glycerol 3-phosphate = a 1-acyl-sn-glycero-3-phosphate + phosphate. The protein operates within lipid metabolism; phospholipid metabolism. In terms of biological role, catalyzes the transfer of an acyl group from acyl-phosphate (acyl-PO(4)) to glycerol-3-phosphate (G3P) to form lysophosphatidic acid (LPA). This enzyme utilizes acyl-phosphate as fatty acyl donor, but not acyl-CoA or acyl-ACP. This is Glycerol-3-phosphate acyltransferase from Pseudomonas fluorescens (strain ATCC BAA-477 / NRRL B-23932 / Pf-5).